Reading from the N-terminus, the 331-residue chain is Adenosine deaminase (331 aa).

Zn(2+) is bound by residues His12 and His14. Residues His14 and Asp16 each coordinate substrate. Residue His197 coordinates Zn(2+). Residue Glu200 is the Proton donor of the active site. Asp278 contributes to the Zn(2+) binding site.

Belongs to the metallo-dependent hydrolases superfamily. Adenosine and AMP deaminases family. Adenosine deaminase subfamily. The cofactor is Zn(2+).

It catalyses the reaction adenosine + H2O + H(+) = inosine + NH4(+). The catalysed reaction is 2'-deoxyadenosine + H2O + H(+) = 2'-deoxyinosine + NH4(+). Catalyzes the hydrolytic deamination of adenosine and 2-deoxyadenosine. The sequence is that of Adenosine deaminase from Shewanella halifaxensis (strain HAW-EB4).